The sequence spans 396 residues: MAKAKFERTKPHVNIGTIGHVDHGKTTLTAAISKVLHDKYPDLNPFTPFDEIDKAPEEKQRGITINIAHVEYQTEKRHYAHVDAPGHADYIKNMITGAAQMDGAILVVAATDGPMAQTREHVLLARQVGVPYLLVALNKSDMVDDEEILELVEMEVRELLSSQGFDGDDAPVIRVSGLKALEGDPEWVKTVEELMDAVDESVPEPVRDMDKPFLMPIEDVFTITGRGTVVTGKVERGKLAINSEVEIVGIRPAQKTTVTGIEMFHKQMDEAWAGENCGLLLRGTKREDVERGQVVVKPGTNTPHTQFEAQVYILSKAEGGRDNPFYSNYRPQFYFRTTDVTGVITLPEGTQMVMPGDNTEMTVDLIQPIAMEEGLGFAIREGGRTIGSGKVTKILA.

The 197-residue stretch at 10 to 206 folds into the tr-type G domain; it reads KPHVNIGTIG…AVDESVPEPV (197 aa). Residues 19 to 26 are G1; that stretch reads GHVDHGKT. 19–26 serves as a coordination point for GTP; it reads GHVDHGKT. Residue Thr-26 participates in Mg(2+) binding. The tract at residues 62-66 is G2; the sequence is GITIN. Residues 83–86 are G3; sequence DAPG. GTP is bound by residues 83–87 and 138–141; these read DAPGH and NKSD. The segment at 138 to 141 is G4; sequence NKSD. Residues 176-178 are G5; sequence SGL.

It belongs to the TRAFAC class translation factor GTPase superfamily. Classic translation factor GTPase family. EF-Tu/EF-1A subfamily. Monomer.

It is found in the cytoplasm. It carries out the reaction GTP + H2O = GDP + phosphate + H(+). Functionally, GTP hydrolase that promotes the GTP-dependent binding of aminoacyl-tRNA to the A-site of ribosomes during protein biosynthesis. This is Elongation factor Tu from Beutenbergia cavernae (strain ATCC BAA-8 / DSM 12333 / CCUG 43141 / JCM 11478 / NBRC 16432 / NCIMB 13614 / HKI 0122).